Reading from the N-terminus, the 221-residue chain is 7-cyano-7-deazaguanine synthase (221 aa).

9–19 (YSGGMDSFTLL) provides a ligand contact to ATP. Cys-185, Cys-193, Cys-196, and Cys-199 together coordinate Zn(2+).

It belongs to the QueC family. Zn(2+) is required as a cofactor.

The catalysed reaction is 7-carboxy-7-deazaguanine + NH4(+) + ATP = 7-cyano-7-deazaguanine + ADP + phosphate + H2O + H(+). It participates in purine metabolism; 7-cyano-7-deazaguanine biosynthesis. In terms of biological role, catalyzes the ATP-dependent conversion of 7-carboxy-7-deazaguanine (CDG) to 7-cyano-7-deazaguanine (preQ(0)). The sequence is that of 7-cyano-7-deazaguanine synthase from Marinobacter nauticus (strain ATCC 700491 / DSM 11845 / VT8) (Marinobacter aquaeolei).